The chain runs to 288 residues: Polyamine aminopropyltransferase (288 aa).

The PABS domain maps to 9 to 238 (ETLHDQFGQY…GIMTFAWATD (230 aa)). Q33 lines the S-methyl-5'-thioadenosine pocket. H64 and D88 together coordinate spermidine. S-methyl-5'-thioadenosine-binding positions include E108 and 140–141 (DG). The active-site Proton acceptor is the D158. 158-161 (DCTD) lines the spermidine pocket. P165 is an S-methyl-5'-thioadenosine binding site.

The protein belongs to the spermidine/spermine synthase family. As to quaternary structure, homodimer or homotetramer.

The protein localises to the cytoplasm. It carries out the reaction S-adenosyl 3-(methylsulfanyl)propylamine + putrescine = S-methyl-5'-thioadenosine + spermidine + H(+). It participates in amine and polyamine biosynthesis; spermidine biosynthesis; spermidine from putrescine: step 1/1. Functionally, catalyzes the irreversible transfer of a propylamine group from the amino donor S-adenosylmethioninamine (decarboxy-AdoMet) to putrescine (1,4-diaminobutane) to yield spermidine. This is Polyamine aminopropyltransferase from Shigella sonnei (strain Ss046).